A 161-amino-acid polypeptide reads, in one-letter code: Phosphopantetheine adenylyltransferase (161 aa).

A substrate-binding site is contributed by serine 9. ATP-binding positions include 9 to 10 (SF) and histidine 17. 3 residues coordinate substrate: lysine 41, leucine 73, and arginine 87. Residues 88 to 90 (GIR), glutamate 98, and 123 to 129 (TGFISST) each bind ATP.

Belongs to the bacterial CoaD family. As to quaternary structure, homohexamer. It depends on Mg(2+) as a cofactor.

The protein resides in the cytoplasm. The enzyme catalyses (R)-4'-phosphopantetheine + ATP + H(+) = 3'-dephospho-CoA + diphosphate. The protein operates within cofactor biosynthesis; coenzyme A biosynthesis; CoA from (R)-pantothenate: step 4/5. Reversibly transfers an adenylyl group from ATP to 4'-phosphopantetheine, yielding dephospho-CoA (dPCoA) and pyrophosphate. This Psychromonas ingrahamii (strain DSM 17664 / CCUG 51855 / 37) protein is Phosphopantetheine adenylyltransferase.